Consider the following 242-residue polypeptide: ATP-dependent dethiobiotin synthetase BioD (242 aa).

An ATP-binding site is contributed by 12–17; that stretch reads EVGKTV. A Mg(2+)-binding site is contributed by threonine 16. Lysine 37 is a catalytic residue. Serine 41 is a substrate binding site. ATP contacts are provided by residues aspartate 51 and 112–115; that span reads EGAG. Mg(2+) is bound by residues aspartate 51 and glutamate 112.

Belongs to the dethiobiotin synthetase family. As to quaternary structure, homodimer. It depends on Mg(2+) as a cofactor.

The protein resides in the cytoplasm. The enzyme catalyses (7R,8S)-7,8-diammoniononanoate + CO2 + ATP = (4R,5S)-dethiobiotin + ADP + phosphate + 3 H(+). It participates in cofactor biosynthesis; biotin biosynthesis; biotin from 7,8-diaminononanoate: step 1/2. Catalyzes a mechanistically unusual reaction, the ATP-dependent insertion of CO2 between the N7 and N8 nitrogen atoms of 7,8-diaminopelargonic acid (DAPA, also called 7,8-diammoniononanoate) to form a ureido ring. The chain is ATP-dependent dethiobiotin synthetase BioD from Bacillus cereus (strain AH820).